A 141-amino-acid chain; its full sequence is Hemoglobin subunit alpha-D (141 aa).

Positions 1–141 (MLTAEDKKLI…VAAVLAEKYR (141 aa)) constitute a Globin domain. Heme b contacts are provided by H58 and H87.

The protein belongs to the globin family. In terms of assembly, heterotetramer of two alpha-D chains and two beta chains. In terms of tissue distribution, red blood cells.

Its function is as follows. Involved in oxygen transport from the lung to the various peripheral tissues. This is Hemoglobin subunit alpha-D (HBAD) from Cairina moschata (Muscovy duck).